A 488-amino-acid polypeptide reads, in one-letter code: Probable glycine dehydrogenase (decarboxylating) subunit 2 (488 aa).

N6-(pyridoxal phosphate)lysine is present on K264.

This sequence belongs to the GcvP family. C-terminal subunit subfamily. As to quaternary structure, the glycine cleavage system is composed of four proteins: P, T, L and H. In this organism, the P 'protein' is a heterodimer of two subunits. It depends on pyridoxal 5'-phosphate as a cofactor.

The catalysed reaction is N(6)-[(R)-lipoyl]-L-lysyl-[glycine-cleavage complex H protein] + glycine + H(+) = N(6)-[(R)-S(8)-aminomethyldihydrolipoyl]-L-lysyl-[glycine-cleavage complex H protein] + CO2. In terms of biological role, the glycine cleavage system catalyzes the degradation of glycine. The P protein binds the alpha-amino group of glycine through its pyridoxal phosphate cofactor; CO(2) is released and the remaining methylamine moiety is then transferred to the lipoamide cofactor of the H protein. The sequence is that of Probable glycine dehydrogenase (decarboxylating) subunit 2 from Methylococcus capsulatus (strain ATCC 33009 / NCIMB 11132 / Bath).